We begin with the raw amino-acid sequence, 2191 residues long: FRAS1-related extracellular matrix protein 1 (2191 aa).

The first 29 residues, 1-29 (MHSPGCTGPKAQWFLLLQLLLLHLDRVSA), serve as a signal peptide directing secretion. A Cell attachment site motif is present at residues 205-207 (RGD). CSPG repeat units lie at residues 300–394 (VPRA…MELE), 419–506 (APRV…FRIF), and 527–621 (PPFL…FVLW). An N-linked (GlcNAc...) asparagine glycan is attached at asparagine 341. Residues asparagine 566 and asparagine 628 are each glycosylated (N-linked (GlcNAc...) asparagine). CSPG repeat units lie at residues 648–779 (KEAP…VSVS), 801–892 (QVPE…LEVT), and 912–1007 (EPPI…LVVS). Asparagine 1039 carries N-linked (GlcNAc...) asparagine glycosylation. CSPG repeat units lie at residues 1049-1151 (PPSI…VYAT), 1172-1273 (EAPD…IQLS), 1294-1391 (TPTL…FYLW), 1412-1504 (GDIV…FTIS), 1525-1614 (LPVL…FLAT), and 1650-1742 (HLHS…FQAM). N-linked (GlcNAc...) asparagine glycosylation occurs at asparagine 1180. The N-linked (GlcNAc...) asparagine glycan is linked to asparagine 1584. The region spanning 1749–1848 (ATPQSLDLRW…DDEVFEVILN (100 aa)) is the Calx-beta domain. Positions 1874–1921 (HPSNSFNQSKHSTWGKGPWHPLPSGSSSLTTSGSPLLERPPPSFTSGD) are disordered. Over residues 1875–1885 (PSNSFNQSKHS) the composition is skewed to polar residues. Over residues 1895–1910 (LPSGSSSLTTSGSPLL) the composition is skewed to low complexity. Residues 2072 to 2186 (HSGYCHILVT…CSKGKAHNFV (115 aa)) enclose the C-type lectin domain. The cysteines at positions 2163 and 2177 are disulfide-linked.

The protein belongs to the FRAS1 family. Interacts with FREM2. Expressed in epidermis and hair follicles. Expressed in many developing epidermal appendages, including the whisker and sensory vibrissae, cranial and trunk hair follicles, meibomian glands, teeth, footpads, eyelash primordia and invaginating mammary glands. Limb expression localizes to sheets of dermal cells on the apical and basal surfaces of the digits but, unlike FRAS1, is excluded from the apical ectodermal ridge. Usually expressed at higher level in dermal cells underlying the differentiating epithelial components, especially underlying the epidermis of the head, limbs, and eyelids. Expression in the eyelid dermis is apparent as early as 13 dpc. Postnatal expression in the skin is limited to the dermal papillae. In the kidney, it is expressed from 12.5 dpc in the mesenchyme surrounding the branching ureteric tree, with a strong expression in the more proximal regions of these tubules rather than at the proliferating and branching ends of the ureteric buds. In hair follicle, it is selectively expressed in the vibrissal hair primordia during development. Preferentially expressed in the whisker pad epithelia of 12.5 dpc embryos, in both the epithelial and mesenchymal cells of developing hair follicles. In the early stages of hair follicle development (i.e. stages 0-1), it is expressed in both hair placodes and dermal condensations. In stage 2, it is detected in dermal condensations and adjacent epithelia, but not in the upper region of the hair follicles. Expressed at the tip of developing hair follicles in the later stages (i.e. stages 3-5).

It is found in the secreted. Its subcellular location is the extracellular space. It localises to the extracellular matrix. The protein localises to the basement membrane. Extracellular matrix protein that plays a role in epidermal differentiation and is required for epidermal adhesion during embryonic development. In Mus musculus (Mouse), this protein is FRAS1-related extracellular matrix protein 1 (Frem1).